We begin with the raw amino-acid sequence, 1156 residues long: MEKRAYIEKIVVEGFKSYGTKRKEIPLGEGFIAVVGPNGAGKSNIGDAISFALGLSSAKALRAKNLSYLIFSKNGQKADHAYVEVHFKNLGAFPVEDEEVVISRKVSKDGRSIFKINGQVVRERDLKDFLAKAGIYETAYNVVYQGDIVKFLKMTPVERRKIIEEISGIGEYERKKEKALEELAEVELKIKEIDLILEEISNQLKRLKEEKEKLEKFKELQRIKRETEAKILLKEKEKLLKERERILNELSSLRESLEDITFQIQENEKELNERERLLKEVNEKIMPFKEKVGKFTAEIENAERSIKEKERELKESENRVKNLEELINNLLSDKENLEREVGTLQLELEKLKEEYKSLKEVEREKLRELEEEEERLKITFDEVKKLEEEKEKLTEKLNSLNKEKQELEIQRANLKNKIERIKEDINKLISEREEKIKEIKEKEQEIKRLKAIKKKEEEELRNLTQELNIYEKRLSEVRKKLEEVLKEKGAIEREVRSFSDVSDVFKDIKGVYGSVSELIRVKNPEHITAIEVAGGGRLKFIVVEDEEVAKECIQLAKRMNLGRFSFIPLNRVRVEERPLRYPRTKGAVDFAVNLVEYDPKFEKVVKFVFGDTLIVENFESAKAIGIGNYRMVTLEGELFEKSGVITGGAVKPSGELNKRYYEEELQRLNAEEEKLKNEESIIQKKIREIRNLISEKTALLKVSERKIEELSSEGLEQYEEKFKEKLENSKEYLKILEEKLLNVEDKLKELAEEIEYYEEKLNNLKLKEGDIKRHYSREGVEEKRREYSKVRKQVSEIEKSLNEIERELNKKTYELEYLEKEIQEKEREREYLTERIKSLKKEIENLILFKEKTLQEVKEAEVKVYDYIKQKEELEKEILNLKSKLGKLKIKEEELKEKIFEKEKNLKVLEEKIENLNEELKEYEDLKLGADEESIPKLKEKLKRVTEEIQKLGSVNFRAEEDYAEELKRFNDYKEKQQKLKEESKAIKKLIEETENKKRKVFLEAFNQINKSLKRIFSFLSPGGKAQMFLDNPEDPFSGGVQLTVKPRGKDVQYLEAMSGGEKTLAALSLIFALQEYKPSPFYYFDEVDAHLDEVNAKKVGELIREKSKEAQFIVVTLREVVTSFADKIVGVSARGGISEVFFLKNEGLEEIIKEA.

37 to 44 (PNGAGKSN) is an ATP binding site. Residues 167–499 (SGIGEYERKK…AIEREVRSFS (333 aa)) are a coiled coil. The 116-residue stretch at 509–624 (KGVYGSVSEL…VENFESAKAI (116 aa)) folds into the SMC hinge domain. The stretch at 654-1001 (GELNKRYYEE…EETENKKRKV (348 aa)) forms a coiled coil.

Belongs to the SMC family. Homodimer.

Its subcellular location is the cytoplasm. Functionally, required for chromosome condensation and partitioning. The sequence is that of Chromosome partition protein Smc from Aquifex aeolicus (strain VF5).